Here is a 212-residue protein sequence, read N- to C-terminus: Fibroblast growth factor 8b (212 aa).

The N-terminal stretch at 1–27 is a signal peptide; sequence MRLKSSRLGYLFLQFMTLCFYTQMTMQ. A glycan (N-linked (GlcNAc...) asparagine) is linked at asparagine 139.

This sequence belongs to the heparin-binding growth factors family.

It localises to the secreted. May act as signaling molecule during development of the midbrain-hindbrain boundary (MHB) organizer, and be involved in patterning of the nervous system. In Danio rerio (Zebrafish), this protein is Fibroblast growth factor 8b (fgf8b).